The sequence spans 103 residues: Carboxysome shell protein CcmK2 (103 aa).

The BMC domain maps to 4–90 (AVGMIETRGF…PHENLEYVLP (87 aa)).

The protein belongs to the bacterial microcompartments protein family. CcmK subfamily. In terms of assembly, homohexamer, might also make dodecamers. Interacts with full-length CcmM. Forms mixed heterohexamers of all possible stoichiometries with CcmK1, which might form dodecamers. Only very weak interactions with CcmK3 and CcmK4 were seen.

It is found in the carboxysome. Its function is as follows. One of the shell proteins of the carboxysome, a polyhedral inclusion where RuBisCO (ribulose bisphosphate carboxylase, rbcL-rbcS) is sequestered. The central pore probably regulates metabolite flux. Hexamers make sheets that form the facets of the polyhedral carboxysome. This chain is Carboxysome shell protein CcmK2, found in Synechocystis sp. (strain ATCC 27184 / PCC 6803 / Kazusa).